Reading from the N-terminus, the 111-residue chain is MASSKPPARIVYQEFGPVADPLSEEQIDLPPQQQNVRIQATRSGRKGKTVTVVSGLQLSAMGQQALLKALKSFCGSGGTLKEDCVEIQGDQREKILAYLLKQGYKAKISGG.

The protein belongs to the SUI1 family.

This is an uncharacterized protein from Synechocystis sp. (strain ATCC 27184 / PCC 6803 / Kazusa).